The primary structure comprises 319 residues: HTH-type transcriptional regulator YidZ (319 aa).

Residues 8–65 (LDLNLLLCLQLLMQERSVTKAAKRMNVTPSAVSKSLAKLRAWFDDPLFVNTPLGLAPT) enclose the HTH lysR-type domain. Positions 25–44 (VTKAAKRMNVTPSAVSKSLA) form a DNA-binding region, H-T-H motif.

Belongs to the LysR transcriptional regulatory family.

In terms of biological role, involved in anaerobic NO protection. The chain is HTH-type transcriptional regulator YidZ from Salmonella typhi.